Here is a 431-residue protein sequence, read N- to C-terminus: Glucose-1-phosphate adenylyltransferase (431 aa).

Lysine 39 is a beta-D-fructose 1,6-bisphosphate binding site. Residues arginine 40, histidine 46, and arginine 52 each contribute to the AMP site. Tyrosine 114 contributes to the alpha-D-glucose 1-phosphate binding site. Arginine 130 is an AMP binding site. Alpha-D-glucose 1-phosphate contacts are provided by residues glycine 179, 194-195, and serine 212; that span reads EK. AMP contacts are provided by glutamate 370 and arginine 386. Beta-D-fructose 1,6-bisphosphate-binding positions include 419–423 and 429–431; these read REMLR and QER.

It belongs to the bacterial/plant glucose-1-phosphate adenylyltransferase family. Homotetramer.

The catalysed reaction is alpha-D-glucose 1-phosphate + ATP + H(+) = ADP-alpha-D-glucose + diphosphate. The protein operates within glycan biosynthesis; glycogen biosynthesis. With respect to regulation, allosterically activated by fructose-1,6-bisphosphate (F16BP) and inhibited by AMP. In terms of biological role, involved in the biosynthesis of ADP-glucose, a building block required for the elongation reactions to produce glycogen. Catalyzes the reaction between ATP and alpha-D-glucose 1-phosphate (G1P) to produce pyrophosphate and ADP-Glc. This chain is Glucose-1-phosphate adenylyltransferase, found in Shigella boydii serotype 18 (strain CDC 3083-94 / BS512).